The following is a 127-amino-acid chain: Major sperm protein 10/36/56/76 (127 aa).

Alanine 2 is subject to N-acetylalanine. The 118-residue stretch at 9 to 126 (DIQTQPNAKI…RRKNLPIEYN (118 aa)) folds into the MSP domain.

In terms of tissue distribution, sperm.

It localises to the cell projection. The protein localises to the pseudopodium. The protein resides in the cytoplasm. Its subcellular location is the cytoskeleton. Central component in molecular interactions underlying sperm crawling. Forms an extensive filament system that extends from sperm villipoda, along the leading edge of the pseudopod. This chain is Major sperm protein 10/36/56/76 (msp-10), found in Caenorhabditis elegans.